A 405-amino-acid chain; its full sequence is Formate-dependent phosphoribosylglycinamide formyltransferase (405 aa).

Residues 22–23 (EL) and Glu-82 contribute to the N(1)-(5-phospho-beta-D-ribosyl)glycinamide site. Residues Arg-115, Lys-162, 167–172 (SSGKGQ), 202–205 (EGFI), and Glu-210 contribute to the ATP site. The region spanning 120-320 (RLAAETLGLP…EFELHARAIL (201 aa)) is the ATP-grasp domain. Mg(2+)-binding residues include Glu-279 and Glu-291. N(1)-(5-phospho-beta-D-ribosyl)glycinamide-binding positions include Asp-298, Lys-367, and 374–375 (RR).

Belongs to the PurK/PurT family. In terms of assembly, homodimer.

The catalysed reaction is N(1)-(5-phospho-beta-D-ribosyl)glycinamide + formate + ATP = N(2)-formyl-N(1)-(5-phospho-beta-D-ribosyl)glycinamide + ADP + phosphate + H(+). The protein operates within purine metabolism; IMP biosynthesis via de novo pathway; N(2)-formyl-N(1)-(5-phospho-D-ribosyl)glycinamide from N(1)-(5-phospho-D-ribosyl)glycinamide (formate route): step 1/1. In terms of biological role, involved in the de novo purine biosynthesis. Catalyzes the transfer of formate to 5-phospho-ribosyl-glycinamide (GAR), producing 5-phospho-ribosyl-N-formylglycinamide (FGAR). Formate is provided by PurU via hydrolysis of 10-formyl-tetrahydrofolate. The polypeptide is Formate-dependent phosphoribosylglycinamide formyltransferase (Leptothrix cholodnii (strain ATCC 51168 / LMG 8142 / SP-6) (Leptothrix discophora (strain SP-6))).